Here is an 873-residue protein sequence, read N- to C-terminus: Leucine--tRNA ligase (873 aa).

The 'HIGH' region signature appears at 42–52 (PYPSGKLHMGH). Residues 628–632 (KMSKS) carry the 'KMSKS' region motif. Residue Lys-631 coordinates ATP.

This sequence belongs to the class-I aminoacyl-tRNA synthetase family.

It is found in the cytoplasm. The catalysed reaction is tRNA(Leu) + L-leucine + ATP = L-leucyl-tRNA(Leu) + AMP + diphosphate. This chain is Leucine--tRNA ligase, found in Azoarcus sp. (strain BH72).